We begin with the raw amino-acid sequence, 210 residues long: 7-carboxy-7-deazaguanine synthase (210 aa).

Residues 12–14 (LQG) and R27 each bind substrate. The Radical SAM core domain occupies 18-210 (HAGRASVFCR…VQTHKSLGIR (193 aa)). [4Fe-4S] cluster is bound by residues C31, C46, and C49. T51 is a binding site for Mg(2+). T90 lines the substrate pocket. S-adenosyl-L-methionine contacts are provided by residues G92, 133–135 (SPK), and 173–176 (QPMD).

Belongs to the radical SAM superfamily. 7-carboxy-7-deazaguanine synthase family. In terms of assembly, homodimer. [4Fe-4S] cluster serves as cofactor. It depends on S-adenosyl-L-methionine as a cofactor. Requires Mg(2+) as cofactor.

The catalysed reaction is 6-carboxy-5,6,7,8-tetrahydropterin + H(+) = 7-carboxy-7-deazaguanine + NH4(+). The protein operates within purine metabolism; 7-cyano-7-deazaguanine biosynthesis. Functionally, catalyzes the complex heterocyclic radical-mediated conversion of 6-carboxy-5,6,7,8-tetrahydropterin (CPH4) to 7-carboxy-7-deazaguanine (CDG), a step common to the biosynthetic pathways of all 7-deazapurine-containing compounds. This is 7-carboxy-7-deazaguanine synthase from Bradyrhizobium diazoefficiens (strain JCM 10833 / BCRC 13528 / IAM 13628 / NBRC 14792 / USDA 110).